Reading from the N-terminus, the 417-residue chain is Guanine nucleotide-exchange factor SEC12 (417 aa).

Residues methionine 1–serine 388 lie on the Cytoplasmic side of the membrane. Tyrosine 10 carries the 3'-nitrotyrosine modification. The interval lysine 101 to glutamate 135 is disordered. Composition is skewed to basic and acidic residues over residues serine 103–proline 115 and alanine 124–glutamate 135. 3 WD repeats span residues serine 152–glutamate 191, alanine 194–glutamine 232, and cysteine 298–tyrosine 337. A helical membrane pass occupies residues valine 389–leucine 409. The Lumenal segment spans residues glutamine 410 to leucine 417.

As to quaternary structure, interacts with SAR1B (GDP-bound form). Interacts with MIA2; recruits PREB to endoplasmic reticulum exit sites. Interacts with CIDEB; facilitating loading of SCAP-SREBP into COPII vesicles.

The protein resides in the endoplasmic reticulum membrane. It localises to the nucleus. Functionally, guanine nucleotide exchange factor (GEF) that regulates the assembly of the coat protein complex II/COPII in endoplasmic reticulum (ER) to Golgi vesicle-mediated transport. Selectively activates SAR1A and SAR1B by promoting the exchange of guanosine diphosphate (GDP) for guanosine triphosphate (GTP) in these small GTPases. In their activated GTP-bound state, SAR1A and SAR1B insert into the membrane of the endoplasmic reticulum where they recruit the remainder of the coat protein complex II/COPII which is responsible for both the sorting of proteins and the deformation and budding of membranes into vesicles destined to the Golgi. Was first identified based on its probable role in the regulation of pituitary gene transcription. Binds to the prolactin gene (PRL) promoter and seems to activate transcription. This Rattus norvegicus (Rat) protein is Guanine nucleotide-exchange factor SEC12.